The sequence spans 288 residues: Homoserine kinase (288 aa).

Proline 79–alanine 89 contacts ATP.

Belongs to the GHMP kinase family. Homoserine kinase subfamily.

It localises to the cytoplasm. It catalyses the reaction L-homoserine + ATP = O-phospho-L-homoserine + ADP + H(+). It participates in amino-acid biosynthesis; L-threonine biosynthesis; L-threonine from L-aspartate: step 4/5. In terms of biological role, catalyzes the ATP-dependent phosphorylation of L-homoserine to L-homoserine phosphate. The sequence is that of Homoserine kinase from Listeria monocytogenes serotype 4b (strain F2365).